The primary structure comprises 312 residues: Taste receptor type 2 member 7 (312 aa).

The Extracellular segment spans residues M1–L9. The chain crosses the membrane as a helical span at residues M10 to V30. The Cytoplasmic portion of the chain corresponds to N31–S49. A helical membrane pass occupies residues S50–V70. Residues Q71 to T101 are Extracellular-facing. A helical transmembrane segment spans residues C102–I122. The Cytoplasmic portion of the chain corresponds to K123 to K128. Residues L129–T149 form a helical membrane-spanning segment. The Extracellular segment spans residues E150 to N187. N-linked (GlcNAc...) asparagine glycans are attached at residues N151 and N167. A helical membrane pass occupies residues L188–L208. Residues W209 to K235 are Cytoplasmic-facing. Residues A236–S256 traverse the membrane as a helical segment. The Extracellular portion of the chain corresponds to S257–A266. The helical transmembrane segment at V267–L287 threads the bilayer. Residues G288–Y312 lie on the Cytoplasmic side of the membrane.

Belongs to the G-protein coupled receptor T2R family. Expressed in subsets of taste receptor cells of the tongue and palate epithelium and exclusively in gustducin-positive cells. Expressed in 15% taste bud cells in circumvallate and foliate papillae but only in 2% in fungiform papillae. Expressed in the duodenum, antrum and fundus (part of the stomach) and in gastric endocrine cells.

Its subcellular location is the membrane. Functionally, gustducin-coupled receptor implicated in the perception of bitter compounds in the oral cavity and the gastrointestinal tract. Signals through PLCB2 and the calcium-regulated cation channel TRPM5. The polypeptide is Taste receptor type 2 member 7 (Tas2r7) (Rattus norvegicus (Rat)).